The chain runs to 85 residues: Small ribosomal subunit protein uS17 (85 aa).

Belongs to the universal ribosomal protein uS17 family. Part of the 30S ribosomal subunit.

Its function is as follows. One of the primary rRNA binding proteins, it binds specifically to the 5'-end of 16S ribosomal RNA. In Mycoplasma capricolum subsp. capricolum (strain California kid / ATCC 27343 / NCTC 10154), this protein is Small ribosomal subunit protein uS17.